The primary structure comprises 120 residues: Flagellar protein FliT (120 aa).

The interval 1 to 50 (MNDSSLSLKKWHALSALSNTMLSLAQSGKWDELIEQEVAYVSLVEKISIT) is required for homodimerization. The fliD binding stretch occupies residues 59 to 97 (IQDQAMVMLNNVLQNEMTLKTLLQERMDELHGLMAQTGK).

It belongs to the FliT family. Homodimer. Interacts with FliD and FlhC.

The protein localises to the cytoplasm. It is found in the cytosol. Functionally, dual-function protein that regulates the transcription of class 2 flagellar operons and that also acts as an export chaperone for the filament-capping protein FliD. As a transcriptional regulator, acts as an anti-FlhDC factor; it directly binds FlhC, thus inhibiting the binding of the FlhC/FlhD complex to class 2 promoters, resulting in decreased expression of class 2 flagellar operons. As a chaperone, effects FliD transition to the membrane by preventing its premature polymerization, and by directing it to the export apparatus. The chain is Flagellar protein FliT from Enterobacter sp. (strain 638).